The chain runs to 374 residues: Probable aminopeptidase YDR415C (374 aa).

Positions 1–18 (MRIQSLFVLFNVAIIAWS) are cleaved as a signal peptide. Zn(2+) contacts are provided by H177, D196, E235, D262, and H340.

Belongs to the peptidase M28 family. M28E subfamily. Zn(2+) is required as a cofactor.

The chain is Probable aminopeptidase YDR415C from Saccharomyces cerevisiae (strain ATCC 204508 / S288c) (Baker's yeast).